The sequence spans 117 residues: Large ribosomal subunit protein bL20 (117 aa).

This sequence belongs to the bacterial ribosomal protein bL20 family.

Its function is as follows. Binds directly to 23S ribosomal RNA and is necessary for the in vitro assembly process of the 50S ribosomal subunit. It is not involved in the protein synthesizing functions of that subunit. This is Large ribosomal subunit protein bL20 from Mesomycoplasma hyopneumoniae (strain J / ATCC 25934 / NCTC 10110) (Mycoplasma hyopneumoniae).